The chain runs to 217 residues: 2-C-methyl-D-erythritol 4-phosphate cytidylyltransferase (217 aa).

The protein belongs to the IspD/TarI cytidylyltransferase family. IspD subfamily.

The catalysed reaction is 2-C-methyl-D-erythritol 4-phosphate + CTP + H(+) = 4-CDP-2-C-methyl-D-erythritol + diphosphate. It functions in the pathway isoprenoid biosynthesis; isopentenyl diphosphate biosynthesis via DXP pathway; isopentenyl diphosphate from 1-deoxy-D-xylulose 5-phosphate: step 2/6. In terms of biological role, catalyzes the formation of 4-diphosphocytidyl-2-C-methyl-D-erythritol from CTP and 2-C-methyl-D-erythritol 4-phosphate (MEP). This Chlamydia abortus (strain DSM 27085 / S26/3) (Chlamydophila abortus) protein is 2-C-methyl-D-erythritol 4-phosphate cytidylyltransferase.